The following is a 177-amino-acid chain: MRTEIEIPDEVTATMDHLEVTVEGPNGSVTRRLWYPDITVDVEDGAVVIETDDDNAKTRSTVGTFESHVTNMFHGVTEGWEYSMEVFYSHFPMQVSVEGGDIVIENFLGEKAPRKTPVRGDTSVEVDGEELTVSGPSIEDVGQTAADIEQLTRVSDKDTRVFQDGVYITETPDRGDV.

The protein belongs to the universal ribosomal protein uL6 family. As to quaternary structure, part of the 50S ribosomal subunit.

Its function is as follows. This protein binds to the 23S rRNA, and is important in its secondary structure. It is located near the subunit interface in the base of the L7/L12 stalk, and near the tRNA binding site of the peptidyltransferase center. In Natronomonas pharaonis (strain ATCC 35678 / DSM 2160 / CIP 103997 / JCM 8858 / NBRC 14720 / NCIMB 2260 / Gabara) (Halobacterium pharaonis), this protein is Large ribosomal subunit protein uL6.